We begin with the raw amino-acid sequence, 763 residues long: Probable ubiquitin carboxyl-terminal hydrolase MINDY-4 (763 aa).

Serine 143 is modified (phosphoserine). Residues 154-368 are disordered; that stretch reads SSKRSSHKSR…SQPASLRKNQ (215 aa). Positions 180 to 202 are enriched in basic and acidic residues; it reads EKTDKLPMSEPSLDTKRMGEKVR. A phosphoserine mark is found at serine 220 and serine 224. Residues 252–261 show a composition bias toward polar residues; the sequence is ELSTHTSTCP. The segment covering 267-278 has biased composition (low complexity); sequence PASSTASTSRSP. Serine 296 carries the post-translational modification Phosphoserine. Positions 346-355 are enriched in basic and acidic residues; the sequence is TQERPERAFE. Polar residues predominate over residues 357 to 368; sequence QGSQPASLRKNQ. The active-site Nucleophile is the cysteine 463. The active-site Proton acceptor is histidine 683.

Belongs to the MINDY deubiquitinase family. FAM188 subfamily.

It carries out the reaction Thiol-dependent hydrolysis of ester, thioester, amide, peptide and isopeptide bonds formed by the C-terminal Gly of ubiquitin (a 76-residue protein attached to proteins as an intracellular targeting signal).. In terms of biological role, probable hydrolase that can remove 'Lys-48'-linked conjugated ubiquitin from proteins. This chain is Probable ubiquitin carboxyl-terminal hydrolase MINDY-4 (MINDY4), found in Bos taurus (Bovine).